Consider the following 182-residue polypeptide: ATP synthase subunit delta (182 aa).

It belongs to the ATPase delta chain family. In terms of assembly, F-type ATPases have 2 components, F(1) - the catalytic core - and F(0) - the membrane proton channel. F(1) has five subunits: alpha(3), beta(3), gamma(1), delta(1), epsilon(1). CF(0) has four main subunits: a(1), b(1), b'(1) and c(10-14). The alpha and beta chains form an alternating ring which encloses part of the gamma chain. F(1) is attached to F(0) by a central stalk formed by the gamma and epsilon chains, while a peripheral stalk is formed by the delta, b and b' chains.

It localises to the cellular thylakoid membrane. F(1)F(0) ATP synthase produces ATP from ADP in the presence of a proton or sodium gradient. F-type ATPases consist of two structural domains, F(1) containing the extramembraneous catalytic core and F(0) containing the membrane proton channel, linked together by a central stalk and a peripheral stalk. During catalysis, ATP synthesis in the catalytic domain of F(1) is coupled via a rotary mechanism of the central stalk subunits to proton translocation. In terms of biological role, this protein is part of the stalk that links CF(0) to CF(1). It either transmits conformational changes from CF(0) to CF(1) or is implicated in proton conduction. This Prochlorococcus marinus (strain MIT 9211) protein is ATP synthase subunit delta.